The following is a 1016-amino-acid chain: EMILIN-1 (1016 aa).

The first 21 residues, 1 to 21 (MAPRTLWSCYLCCLLTAAAGA), serve as a signal peptide directing secretion. The EMI domain occupies 56–131 (HRNWCAYVVT…QGYGGDDCAE (76 aa)). Disulfide bonds link Cys60–Cys121, Cys85–Cys92, and Cys120–Cys129. The segment at 135–182 (PALGPASSTPRPLARPARPNLSGSSAGSPLSGLGGEGPGESEKVQQLE) is disordered. Positions 139-165 (PASSTPRPLARPARPNLSGSSAGSPLS) are enriched in low complexity. A glycan (N-linked (GlcNAc...) asparagine) is linked at Asn154. Residues 216–256 (TAFNGRQQPADAAARPGVHETLNEIQHQLQLLDTRVSTHDQ) adopt a coiled-coil conformation. 2 disordered regions span residues 257–288 (ELGH…GPSE) and 383–402 (RGTE…GYTS). Positions 266-279 (GGSSSSGGSRAPAP) are enriched in low complexity. The stretch at 356–420 (PELGRRLAEL…EDRFNSTLGP (65 aa)) forms a coiled coil. Positions 386 to 397 (ELGGAAGQGGHP) are enriched in gly residues. Asn415 is a glycosylation site (N-linked (GlcNAc...) asparagine). Positions 416–435 (STLGPSEEQEESWPGAPGGL) are disordered. Residues Asn455 and Asn561 are each glycosylated (N-linked (GlcNAc...) asparagine). Positions 576-603 (AHGDEGCGACGGVQEELGRLRDGVERCS) form a coiled coil. Asn658 carries N-linked (GlcNAc...) asparagine glycosylation. A coiled-coil region spans residues 685–752 (IISEINRLQQ…GLQGLREGLS (68 aa)). N-linked (GlcNAc...) asparagine glycosylation is found at Asn766 and Asn794. 2 disordered regions span residues 811 to 863 (DLTG…VEGA) and 942 to 961 (RVDS…VAES). The Collagen-like domain maps to 814-864 (GPAGEAGPPGPPGLQGPPGPAGPPGSPGKDGQEGPIGPPGPQGEQGVEGAP). Pro residues predominate over residues 821-839 (PPGPPGLQGPPGPAGPPGS). Positions 835–857 (GPPGSPGKDGQEGPIGPPGPQGE) form a coiled coil. One can recognise a C1q domain in the interval 866-1013 (APVPQVAFSA…GALLYGDPEL (148 aa)).

As to quaternary structure, homotrimer associated through a moderately stable interaction of the C-terminal globular C1q domains, allowing the nucleation of the triple helix and then a further quaternary assembly to higher-order polymers via intermolecular disulfide bonds. Interacts with EMILIN2. Interacts with EFEMP2; this interaction promotes the incorporation of EFEMP2 into the extracellular matrix. Distributed in tissues where resilience and elastic recoil are prominent. Highest levels in the adult small intestine, aorta, lung, uterus, and appendix and in the fetal spleen, kidney, lung, and heart; intermediate expression was detected in adult liver, ovary, colon, stomach, lymph node and spleen; adult heart, bladder, prostate, adrenal gland, mammary gland, placenta and kidney showed low expression whereas a series of other adult tissues, including skeletal muscle and different regions of adult brain show no expression. Detected in intramuscular nerve bundles, where it particularly localizes in the epineurium, the most external layer of dense connective tissue enclosing the nerve.

It localises to the secreted. The protein resides in the extracellular space. Its subcellular location is the extracellular matrix. Its function is as follows. Involved in elastic and collagen fibers formation. It is required for EFEMP2 deposition into the extracellular matrix, and collagen network assembly and cross-linking via protein-lysine 6-oxidase/LOX activity. May be responsible for anchoring smooth muscle cells to elastic fibers, and may be involved in the processes that regulate vessel assembly. Has cell adhesive capacity. The chain is EMILIN-1 (EMILIN1) from Homo sapiens (Human).